Here is a 273-residue protein sequence, read N- to C-terminus: Oligodendrocyte transcription factor 3 (273 aa).

The span at 1–14 (MNSDSSSVSSRASS) shows a compositional bias: low complexity. The tract at residues 1–72 (MNSDSSSVSS…KAAGESSKYK (72 aa)) is disordered. Residues 24 to 34 (DHHHRHHHHHQ) show a composition bias toward basic residues. Over residues 37–47 (RLNSVSSTQGD) the composition is skewed to polar residues. The stretch at 69 to 90 (SKYKIKKQLSEQDLQQLRLKIN) forms a coiled coil. Residues 84-138 (QLRLKINGRERKRMHDLNLAMDGLREVMPYAHGPSVRKLSKIATLLLARNYILML) form the bHLH domain.

Weakly expressed, mainly in non-neural tissues.

It localises to the nucleus. In terms of biological role, may determine the distinct specification program of class A neurons in the dorsal part of the spinal cord and suppress specification of class B neurons. In Mus musculus (Mouse), this protein is Oligodendrocyte transcription factor 3 (Olig3).